The primary structure comprises 183 residues: Small ribosomal subunit protein uS5 (183 aa).

The S5 DRBM domain occupies 11–71 (FLERVVGINR…EEAKKSFFRV (61 aa)).

The protein belongs to the universal ribosomal protein uS5 family. As to quaternary structure, part of the 30S ribosomal subunit. Contacts proteins S4 and S8.

With S4 and S12 plays an important role in translational accuracy. In terms of biological role, located at the back of the 30S subunit body where it stabilizes the conformation of the head with respect to the body. The protein is Small ribosomal subunit protein uS5 of Micrococcus luteus (Micrococcus lysodeikticus).